The sequence spans 151 residues: US8.5 protein (151 aa).

A disordered region spans residues 27–107; sequence SSQPLDPEGP…APSPHPRPPG (81 aa). Basic and acidic residues predominate over residues 80-91; that stretch reads SDERGPPRHDRP.

It is found in the host nucleus. The protein localises to the host nucleolus. The polypeptide is US8.5 protein (US8.5) (Human herpesvirus 1 (strain F) (HHV-1)).